The sequence spans 200 residues: Glycerol-3-phosphate acyltransferase (200 aa).

The next 5 membrane-spanning stretches (helical) occupy residues 1–21, 53–73, 81–101, 114–134, and 139–159; these read MLLS…MPNG, GPAL…VLLA, WVQV…VWLG, MFLG…MAVI, and IVSL…LTSG.

It belongs to the PlsY family. Probably interacts with PlsX.

The protein localises to the cell inner membrane. The enzyme catalyses an acyl phosphate + sn-glycerol 3-phosphate = a 1-acyl-sn-glycero-3-phosphate + phosphate. Its pathway is lipid metabolism; phospholipid metabolism. Its function is as follows. Catalyzes the transfer of an acyl group from acyl-phosphate (acyl-PO(4)) to glycerol-3-phosphate (G3P) to form lysophosphatidic acid (LPA). This enzyme utilizes acyl-phosphate as fatty acyl donor, but not acyl-CoA or acyl-ACP. The sequence is that of Glycerol-3-phosphate acyltransferase from Synechococcus sp. (strain CC9902).